A 593-amino-acid chain; its full sequence is Proline dehydrogenase 1, mitochondrial (593 aa).

Residues 24–44 form a disordered region; it reads PAAREQPAAGPGAEPVCGPAE. Lysine 368 and lysine 479 each carry N6-acetyllysine.

Belongs to the proline oxidase family. Requires FAD as cofactor.

Its subcellular location is the mitochondrion matrix. The enzyme catalyses L-proline + a quinone = (S)-1-pyrroline-5-carboxylate + a quinol + H(+). It participates in amino-acid degradation; L-proline degradation into L-glutamate; L-glutamate from L-proline: step 1/2. Functionally, converts proline to delta-1-pyrroline-5-carboxylate. The sequence is that of Proline dehydrogenase 1, mitochondrial from Bos taurus (Bovine).